A 286-amino-acid polypeptide reads, in one-letter code: Tryptophan 2,3-dioxygenase (286 aa).

Substrate is bound by residues Phe-55–His-59, Tyr-117, and Arg-121. His-244 lines the heme pocket. Position 258 (Thr-258) interacts with substrate.

It belongs to the tryptophan 2,3-dioxygenase family. As to quaternary structure, homotetramer. The cofactor is heme.

The catalysed reaction is L-tryptophan + O2 = N-formyl-L-kynurenine. It participates in amino-acid degradation; L-tryptophan degradation via kynurenine pathway; L-kynurenine from L-tryptophan: step 1/2. Its function is as follows. Heme-dependent dioxygenase that catalyzes the oxidative cleavage of the L-tryptophan (L-Trp) pyrrole ring and converts L-tryptophan to N-formyl-L-kynurenine. Catalyzes the oxidative cleavage of the indole moiety. In Shewanella woodyi (strain ATCC 51908 / MS32), this protein is Tryptophan 2,3-dioxygenase.